The sequence spans 493 residues: Glutamate--tRNA ligase (493 aa).

A 'HIGH' region motif is present at residues 10-20 (PSPTGDPHVGT). The 'KMSKS' region signature appears at 251–255 (KLSKR). Residue lysine 254 coordinates ATP.

The protein belongs to the class-I aminoacyl-tRNA synthetase family. Glutamate--tRNA ligase type 1 subfamily. In terms of assembly, monomer.

It localises to the cytoplasm. The enzyme catalyses tRNA(Glu) + L-glutamate + ATP = L-glutamyl-tRNA(Glu) + AMP + diphosphate. Functionally, catalyzes the attachment of glutamate to tRNA(Glu) in a two-step reaction: glutamate is first activated by ATP to form Glu-AMP and then transferred to the acceptor end of tRNA(Glu). This is Glutamate--tRNA ligase from Marinomonas sp. (strain MWYL1).